The sequence spans 584 residues: 2-succinyl-5-enolpyruvyl-6-hydroxy-3-cyclohexene-1-carboxylate synthase (584 aa).

This sequence belongs to the TPP enzyme family. MenD subfamily. As to quaternary structure, homodimer. It depends on Mg(2+) as a cofactor. The cofactor is Mn(2+). Thiamine diphosphate is required as a cofactor.

It carries out the reaction isochorismate + 2-oxoglutarate + H(+) = 5-enolpyruvoyl-6-hydroxy-2-succinyl-cyclohex-3-ene-1-carboxylate + CO2. Its pathway is quinol/quinone metabolism; 1,4-dihydroxy-2-naphthoate biosynthesis; 1,4-dihydroxy-2-naphthoate from chorismate: step 2/7. It participates in quinol/quinone metabolism; menaquinone biosynthesis. Catalyzes the thiamine diphosphate-dependent decarboxylation of 2-oxoglutarate and the subsequent addition of the resulting succinic semialdehyde-thiamine pyrophosphate anion to isochorismate to yield 2-succinyl-5-enolpyruvyl-6-hydroxy-3-cyclohexene-1-carboxylate (SEPHCHC). The protein is 2-succinyl-5-enolpyruvyl-6-hydroxy-3-cyclohexene-1-carboxylate synthase of Bacillus thuringiensis (strain Al Hakam).